Reading from the N-terminus, the 39-residue chain is Cytochrome b559 subunit beta (39 aa).

Residues 14–30 (WLAVHGLAVPTVFFLGS) traverse the membrane as a helical segment. Residue H18 coordinates heme.

This sequence belongs to the PsbE/PsbF family. In terms of assembly, heterodimer of an alpha subunit and a beta subunit. PSII is composed of 1 copy each of membrane proteins PsbA, PsbB, PsbC, PsbD, PsbE, PsbF, PsbH, PsbI, PsbJ, PsbK, PsbL, PsbM, PsbT, PsbX, PsbY, PsbZ, Psb30/Ycf12, at least 3 peripheral proteins of the oxygen-evolving complex and a large number of cofactors. It forms dimeric complexes. Heme b is required as a cofactor.

The protein localises to the plastid. It localises to the chloroplast thylakoid membrane. Functionally, this b-type cytochrome is tightly associated with the reaction center of photosystem II (PSII). PSII is a light-driven water:plastoquinone oxidoreductase that uses light energy to abstract electrons from H(2)O, generating O(2) and a proton gradient subsequently used for ATP formation. It consists of a core antenna complex that captures photons, and an electron transfer chain that converts photonic excitation into a charge separation. The protein is Cytochrome b559 subunit beta of Cedrus deodara (Deodar cedar).